A 402-amino-acid polypeptide reads, in one-letter code: Phosphoglycerate kinase (402 aa).

Substrate is bound by residues 24 to 26, Arg-40, 63 to 66, Arg-122, and Arg-155; these read DFN and HFGR. ATP-binding positions include Lys-206, Gly-297, Glu-328, and 357-360; that span reads GGDS.

This sequence belongs to the phosphoglycerate kinase family. In terms of assembly, monomer.

It localises to the cytoplasm. The enzyme catalyses (2R)-3-phosphoglycerate + ATP = (2R)-3-phospho-glyceroyl phosphate + ADP. It functions in the pathway carbohydrate degradation; glycolysis; pyruvate from D-glyceraldehyde 3-phosphate: step 2/5. The protein is Phosphoglycerate kinase of Synechococcus sp. (strain CC9311).